Reading from the N-terminus, the 400-residue chain is MFNTNTSNISTNVYGLSQKTRALSHITAEADVNRFLVGTTALREENEIALLEAKEGEGVRCLSIFPHPKEIHSITSCPFDSSLFFSVYNTSGGGNNNSNNTNNNDNTNNNTNNNDFKSSLWRINESMDSIEELFELKGHTGIIKPILCDPSGSNNFIISLDDSNIRLWSKIDDQNEPTVIKQFGNLSKLSVGSINPNISNQLATANDVNIKGWDFRNAKETFSMDKAHSEQIRDIDFNPNKPYYLLSAGDDCKLKIWDTRQTRDPVKIFSGHNHWIWSAKFNRYHDQLIITSSSDNTVKLWNLYSLSSAFNSENNISNSNEQQHSQQPNEQQPQQPPQPVKQKKNKRNEDQLIKTYEEHEDSVYNISWSSSNFLFASLSYDGRFVVNNVPKEYSDILSYI.

The disordered stretch occupies residues Asn95–Asn114. The segment covering Asn96–Asn114 has biased composition (low complexity). 3 WD repeats span residues Gly138 to Thr178, Ala227 to Lys267, and Gly271 to Asn311. Over residues Asn314–Pro333 the composition is skewed to low complexity. The segment at Asn314–Asn348 is disordered. A WD 4 repeat occupies Glu358–Leu397.

It belongs to the WD repeat EIPR1 family.

The polypeptide is EARP-interacting protein homolog (Dictyostelium discoideum (Social amoeba)).